Here is a 265-residue protein sequence, read N- to C-terminus: 4-hydroxy-tetrahydrodipicolinate reductase (265 aa).

Position 9 to 14 (9 to 14 (GPRGRM)) interacts with NAD(+). Residue Arg37 coordinates NADP(+). NAD(+) contacts are provided by residues 98–100 (GTT) and 124–127 (APNF). His154 functions as the Proton donor/acceptor in the catalytic mechanism. His155 is a binding site for (S)-2,3,4,5-tetrahydrodipicolinate. Lys158 (proton donor) is an active-site residue. 164 to 165 (GT) lines the (S)-2,3,4,5-tetrahydrodipicolinate pocket.

It belongs to the DapB family.

The protein resides in the cytoplasm. It carries out the reaction (S)-2,3,4,5-tetrahydrodipicolinate + NAD(+) + H2O = (2S,4S)-4-hydroxy-2,3,4,5-tetrahydrodipicolinate + NADH + H(+). The catalysed reaction is (S)-2,3,4,5-tetrahydrodipicolinate + NADP(+) + H2O = (2S,4S)-4-hydroxy-2,3,4,5-tetrahydrodipicolinate + NADPH + H(+). The protein operates within amino-acid biosynthesis; L-lysine biosynthesis via DAP pathway; (S)-tetrahydrodipicolinate from L-aspartate: step 4/4. Catalyzes the conversion of 4-hydroxy-tetrahydrodipicolinate (HTPA) to tetrahydrodipicolinate. The polypeptide is 4-hydroxy-tetrahydrodipicolinate reductase (Geobacillus kaustophilus (strain HTA426)).